A 461-amino-acid polypeptide reads, in one-letter code: Dihydrolipoyl dehydrogenase (461 aa).

Residues 34-42 (EEDQAGGTC), K51, and G114 contribute to the FAD site. An intrachain disulfide couples C42 to C47. NAD(+) contacts are provided by residues 177–181 (GGGVI), E200, and 261–264 (AIGR). The FAD site is built by D304 and A312. The Proton acceptor role is filled by H436.

This sequence belongs to the class-I pyridine nucleotide-disulfide oxidoreductase family. It depends on FAD as a cofactor.

The protein resides in the cytoplasm. It carries out the reaction N(6)-[(R)-dihydrolipoyl]-L-lysyl-[protein] + NAD(+) = N(6)-[(R)-lipoyl]-L-lysyl-[protein] + NADH + H(+). The branched-chain alpha-keto dehydrogenase complex catalyzes the overall conversion of alpha-keto acids to acyl-CoA and CO(2). It contains multiple copies of 3 enzymatic components: branched-chain alpha-keto acid decarboxylase (E1), lipoamide acyltransferase (E2) and lipoamide dehydrogenase (E3). This chain is Dihydrolipoyl dehydrogenase (lpdA), found in Chlamydia pneumoniae (Chlamydophila pneumoniae).